The primary structure comprises 205 residues: GTP cyclohydrolase-2 (205 aa).

49-53 (RLHSE) serves as a coordination point for GTP. Positions 54, 65, and 67 each coordinate Zn(2+). GTP-binding positions include Gln-70, 92-94 (EGR), and Thr-114. The Proton acceptor role is filled by Asp-126. Residue Arg-128 is the Nucleophile of the active site. 2 residues coordinate GTP: Thr-149 and Lys-154.

Belongs to the GTP cyclohydrolase II family. Zn(2+) is required as a cofactor.

The catalysed reaction is GTP + 4 H2O = 2,5-diamino-6-hydroxy-4-(5-phosphoribosylamino)-pyrimidine + formate + 2 phosphate + 3 H(+). The protein operates within cofactor biosynthesis; riboflavin biosynthesis; 5-amino-6-(D-ribitylamino)uracil from GTP: step 1/4. Catalyzes the conversion of GTP to 2,5-diamino-6-ribosylamino-4(3H)-pyrimidinone 5'-phosphate (DARP), formate and pyrophosphate. This chain is GTP cyclohydrolase-2, found in Pseudomonas putida (strain ATCC 700007 / DSM 6899 / JCM 31910 / BCRC 17059 / LMG 24140 / F1).